Here is a 214-residue protein sequence, read N- to C-terminus: Ribosomal RNA small subunit methyltransferase G (214 aa).

S-adenosyl-L-methionine contacts are provided by residues Gly-81, Met-86, 132 to 133 (VE), and Arg-147.

The protein belongs to the methyltransferase superfamily. RNA methyltransferase RsmG family.

It localises to the cytoplasm. The enzyme catalyses guanosine(527) in 16S rRNA + S-adenosyl-L-methionine = N(7)-methylguanosine(527) in 16S rRNA + S-adenosyl-L-homocysteine. Its function is as follows. Specifically methylates the N7 position of guanine in position 527 of 16S rRNA. This Pseudomonas aeruginosa (strain LESB58) protein is Ribosomal RNA small subunit methyltransferase G.